We begin with the raw amino-acid sequence, 707 residues long: Eomesodermin homolog (707 aa).

Gly residues predominate over residues 27–42; the sequence is GGGGGGGGGGGGGGGS. Residues 27-125 form a disordered region; sequence GGGGGGGGGG…GSPCAEEELP (99 aa). A compositionally biased stretch (low complexity) spans 73-93; that stretch reads AGSAEPAGAGAGAPAAMLSDA. A Phosphoserine modification is found at Ser117. Positions 278 to 458 form a DNA-binding region, T-box; that stretch reads LWLKFHRHQT…HNPFAKGFRD (181 aa). Phosphothreonine is present on Thr473. A required for transcription activation region spans residues 592–707; the sequence is AMAGWGGRGA…GAYYAFYTSP (116 aa). The segment at 642-689 is disordered; that stretch reads TPPSIKSLDSSDSGVYNSACKRKRLSPSTPSNGNSPPIKCEDINTEEY. The segment covering 648-657 has biased composition (polar residues); sequence SLDSSDSGVY. Low complexity predominate over residues 667 to 678; it reads SPSTPSNGNSPP. A compositionally biased stretch (basic and acidic residues) spans 680 to 689; the sequence is KCEDINTEEY.

As to expression, expressed in CD8+ T-cells.

The protein localises to the nucleus. Its function is as follows. Functions as a transcriptional activator playing a crucial role during development. Functions in trophoblast differentiation and later in gastrulation, regulating both mesoderm delamination and endoderm specification. Plays a role in brain development being required for the specification and the proliferation of the intermediate progenitor cells and their progeny in the cerebral cortex. Required for differentiation and migration of unipolar dendritic brush cells. Also involved in the differentiation of CD8+ T-cells during immune response regulating the expression of lytic effector genes. The chain is Eomesodermin homolog (Eomes) from Mus musculus (Mouse).